The chain runs to 407 residues: MTAVFRVGLVRLVSRATQSPNLLQAQTNALPAAFQQRCSISGKTMRGGPRVPKAAPYPYKTKKYSVFNAIFDKTSKRFDENSKVICVEGPIAAGKSKFAKELAEELDMEYYPAVDLDLIYINSYGYDMRKLDPQLPPSCRSYDVRNFCLDPSHDLAAQFQIRMYMLRYSQYIDALQHVLSTGQGVVLERSPYSDFVFMEAMFRQGYLSRGARSVYNELRQNTIGELLKPHLVIYLDLPVDAVKKQIKARNVDYEVQSKVFSDAYLSDLEQLYKQQYLKDISTHAELLIYDWTAGGETEVVVEDIERIDFNQFEADIHNKKMLDWRFPLEAEWCEARIKYCHEKPDLMNYFNVPRFDVPELVRSADDGKVWRDVWFNAPGMKYRPGYNADMGDEGLLTKTKIGINQGI.

A mitochondrion-targeting transit peptide spans 1–60; the sequence is MTAVFRVGLVRLVSRATQSPNLLQAQTNALPAAFQQRCSISGKTMRGGPRVPKAAPYPYK.

This sequence belongs to the complex I NDUFA10 subunit family. As to quaternary structure, complex I is composed of 45 different subunits. This a component of the hydrophobic protein fraction. Forms a complex including sicily, ND-42 and Hsp83; the complex is necessary to chaperone ND-42 in the cytoplasm before mitochondrial import; the interaction between sicily and ND-42 is direct and occurs preferably between the unprocessed forms in the cytoplasm. The cofactor is FAD. As to expression, expressed in muscles (at protein level).

The protein localises to the mitochondrion matrix. It localises to the cytoplasm. Accessory subunit of the mitochondrial membrane respiratory chain NADH dehydrogenase (Complex I), that is believed not to be involved in catalysis. Complex I functions in the transfer of electrons from NADH to the respiratory chain. The immediate electron acceptor for the enzyme is believed to be ubiquinone. The protein is NADH dehydrogenase [ubiquinone] 1 alpha subcomplex subunit 10, mitochondrial of Drosophila melanogaster (Fruit fly).